Consider the following 23-residue polypeptide: Alyteserin-1b (23 aa).

Position 23 is an asparagine amide (asparagine 23).

In terms of tissue distribution, expressed by the skin glands.

It localises to the secreted. It is found in the target cell membrane. Its function is as follows. Antibacterial peptide with amphipathic alpha-helical structure. Shows selective growth inhibitory activity against the Gram-negative bacteria E.coli (MIC=25 uM). Has a weak hemolytic activity against human erythrocytes (LC(50)=200 uM). Is not active against S.aureus (MIC=200 uM). This is Alyteserin-1b from Alytes obstetricans (Common midwife toad).